Consider the following 570-residue polypeptide: 4-coumarate--CoA ligase 4 (570 aa).

Ser218, Ser219, Gly220, Thr221, Thr222, and Lys226 together coordinate ATP. A (E)-4-coumaroyl-AMP-binding site is contributed by Tyr268. A CoA-binding site is contributed by Arg289. Residues 291–360 (ELNLVMELIQ…LKFPNAIFGQ (70 aa)) are SBD1. The (E)-4-coumaroyl-AMP site is built by Ala338, Gln360, Gly361, and Thr365. Positions 360, 361, 365, 448, and 463 each coordinate ATP. Residues 361 to 427 (GYGMTESGTV…VRGHQLMKGY (67 aa)) are SBD2. Residues Lys465 and Lys469 each coordinate (E)-4-coumaroyl-AMP. Residues Lys471 and Gly472 each contribute to the CoA site. Lys554 contributes to the ATP binding site.

This sequence belongs to the ATP-dependent AMP-binding enzyme family. It depends on Mg(2+) as a cofactor.

It catalyses the reaction (E)-sinapate + ATP + CoA = (E)-sinapoyl-CoA + AMP + diphosphate. It carries out the reaction (E)-4-coumarate + ATP + CoA = (E)-4-coumaroyl-CoA + AMP + diphosphate. The catalysed reaction is (E)-caffeate + ATP + CoA = (E)-caffeoyl-CoA + AMP + diphosphate. The enzyme catalyses (E)-ferulate + ATP + CoA = (E)-feruloyl-CoA + AMP + diphosphate. It catalyses the reaction (E)-sinapate + ATP + H(+) = (E)-sinapoyl-AMP + diphosphate. It carries out the reaction (E)-sinapoyl-AMP + CoA = (E)-sinapoyl-CoA + AMP + H(+). The catalysed reaction is (E)-4-coumarate + ATP + H(+) = (E)-4-coumaroyl-AMP + diphosphate. The enzyme catalyses (E)-4-coumaroyl-AMP + CoA = (E)-4-coumaroyl-CoA + AMP + H(+). It catalyses the reaction (E)-caffeate + ATP + H(+) = (E)-caffeoyl-AMP + diphosphate. It carries out the reaction (E)-caffeoyl-AMP + CoA = (E)-caffeoyl-CoA + AMP + H(+). The catalysed reaction is (E)-ferulate + ATP + H(+) = (E)-feruloyl-AMP + diphosphate. The enzyme catalyses (E)-feruloyl-AMP + CoA = (E)-feruloyl-CoA + AMP + H(+). It functions in the pathway phytoalexin biosynthesis; 3,4',5-trihydroxystilbene biosynthesis; 3,4',5-trihydroxystilbene from trans-4-coumarate: step 1/2. Functionally, produces CoA thioesters of a variety of hydroxy- and methoxy-substituted cinnamic acids, which are used to synthesize several phenylpropanoid-derived compounds, including anthocyanins, flavonoids, isoflavonoids, coumarins, lignin, suberin and wall-bound phenolics. Follows a two-step reaction mechanism, wherein the carboxylate substrate first undergoes adenylation by ATP, followed by a thioesterification in the presence of CoA to yield the final CoA thioesters. The chain is 4-coumarate--CoA ligase 4 from Arabidopsis thaliana (Mouse-ear cress).